A 1404-amino-acid chain; its full sequence is DNA-directed RNA polymerase subunit beta' (1404 aa).

Residues C70, C72, C85, and C88 each coordinate Zn(2+). Positions 460, 462, and 464 each coordinate Mg(2+). 4 residues coordinate Zn(2+): C814, C888, C895, and C898.

It belongs to the RNA polymerase beta' chain family. In terms of assembly, the RNAP catalytic core consists of 2 alpha, 1 beta, 1 beta' and 1 omega subunit. When a sigma factor is associated with the core the holoenzyme is formed, which can initiate transcription. The cofactor is Mg(2+). Zn(2+) serves as cofactor.

It catalyses the reaction RNA(n) + a ribonucleoside 5'-triphosphate = RNA(n+1) + diphosphate. Functionally, DNA-dependent RNA polymerase catalyzes the transcription of DNA into RNA using the four ribonucleoside triphosphates as substrates. The polypeptide is DNA-directed RNA polymerase subunit beta' (Shewanella amazonensis (strain ATCC BAA-1098 / SB2B)).